The primary structure comprises 290 residues: L-fucono-1,5-lactonase (290 aa).

It belongs to the metallo-dependent hydrolases superfamily.

The catalysed reaction is L-fucono-1,5-lactone + H2O = L-fuconate + H(+). It catalyses the reaction L-fucono-1,4-lactone + H2O = L-fuconate + H(+). The enzyme catalyses D-arabinono-1,4-lactone + H2O = D-arabinonate + H(+). It carries out the reaction L-xylono-1,4-lactone + H2O = L-xylonate + H(+). The catalysed reaction is L-galactono-1,4-lactone + H2O = L-galactonate + H(+). In terms of biological role, catalyzes the hydrolysis of L-fucono-1,5-lactone to L-fuconate. Can also hydrolyze L-fucono-1,4-lactone, L-galactono-1,4-lactone D-arabinono-1,4-lactone and L-xylono-1,4-lactone. The polypeptide is L-fucono-1,5-lactonase (Burkholderia ambifaria (strain ATCC BAA-244 / DSM 16087 / CCUG 44356 / LMG 19182 / AMMD) (Burkholderia cepacia (strain AMMD))).